The primary structure comprises 1356 residues: Tenascin-R (1356 aa).

The first 31 residues, 1 to 31 (MGIEGETVVLKNMLIGVNLILLGSMLKPSEC), serve as a signal peptide directing secretion. The N-linked (GlcNAc...) asparagine glycan is linked to Asn55. The stretch at 127-157 (CASSAQVLQELLSRIEMLEREVSVLRDQCNT) forms a coiled coil. A glycan (O-linked (Xyl...) (chondroitin sulfate) serine) is linked at Ser176. Asn180 and Asn198 each carry an N-linked (GlcNAc...) asparagine glycan. 3 EGF-like domains span residues 188 to 199 (CICNEGWFGKNC), 204 to 230 (CPLGCSSRGVCVDGQCICDSEYSGDDC), and 235 to 261 (CPTDCSSRGLCVDGECVCEEPYTGEDC). O-linked (Xyl...) (chondroitin sulfate) serine glycosylation occurs at Ser271. Asn278 is a glycosylation site (N-linked (GlcNAc...) asparagine). 2 consecutive EGF-like domains span residues 281 to 292 (CLCQEGYAGEDC) and 293 to 324 (SQRRCLNACSGRGHCQEGLCICEEGYQGPDCS). Disulfide bonds link Cys297/Cys307 and Cys314/Cys323. O-linked (Xyl...) (chondroitin sulfate) serine glycosylation is present at Ser302. Fibronectin type-III domains lie at 328–419 (PPED…TPQG), 420–504 (LQFK…TVID), 505–596 (GPTQ…IDAP), 597–686 (KNLR…TELD), 687–776 (SPRD…FRPI), 777–864 (SHLH…TGID), 865–953 (PPKN…AMDS), 954–1040 (PMDL…TLLD), and 1041–1129 (PPAN…GGRV). Asn391, Asn469, and Asn580 each carry an N-linked (GlcNAc...) asparagine glycan. The residue at position 723 (Ser723) is a Phosphoserine. Residues Asn790, Asn868, Asn873, Asn1034, Asn1044, and Asn1259 are each glycosylated (N-linked (GlcNAc...) asparagine). The Fibrinogen C-terminal domain maps to 1127 to 1342 (GRVFSHPQDC…FVEMKMRPYI (216 aa)).

Belongs to the tenascin family. In terms of assembly, forms oligomers. Interacts with TNC and FN1. Interacts with BCAN and ACAN in a calcium -dependent manner. Interacts with CNTN1, SCN2B, PTPRZ1, and CSPG3. Contains N-linked oligosaccharides, O-linked sialylated structures. Contains O-linked chondroitin sulfate glycosaminoglycans. Contains N-linked oligosaccharides with a sulfated carbohydrate structure type GalNAc-4-SO4 or HNK-1 (SO4-3-GlcUABeta1,3GalBeta1,4GlcNAc). The levels of HNK-1 rise and fall in parallel to those of TNR during postnatal development of the cerebellum. In contrast, levels of GalNAc-4-SO4 are regulated independently from those of TNR, rising late in cerebellar development and continuing into adulthood. Early in postnatal development, GalNAc-4-SO4 is found predominantly on isoform 1, whereas in the adult it is predominantly on isoform 2. In terms of tissue distribution, brain-specific. Expressed in oligodendrocytes and small subsets of neurons (mainly interneurons and motoneurons) of the cerebellum, hippocampus and olfactory bulb. Expressed in dorsal root ganglia.

The protein localises to the secreted. The protein resides in the extracellular space. Its subcellular location is the extracellular matrix. Functionally, neural extracellular matrix (ECM) protein involved in interactions with different cells and matrix components. Theses interactions can influence cellular behavior by either evoking a stable adhesion and differentiation, or repulsion and inhibition of neurite growth. Binding to cell surface gangliosides inhibits RGD-dependent integrin-mediated cell adhesion and results in an inhibition of PTK2/FAK1 (FAK) phosphorylation and cell detachment. Binding to membrane surface sulfatides results in a oligodendrocyte adhesion and differentiation. Interaction with CNTN1 induces a repulsion of neurons and an inhibition of neurite outgrowth. Interacts with SCN2B may play a crucial role in clustering and regulation of activity of sodium channels at nodes of Ranvier. TNR-linked chondroitin sulfate glycosaminoglycans are involved in the interaction with FN1 and mediates inhibition of cell adhesion and neurite outgrowth. The highly regulated addition of sulfated carbohydrate structure may modulate the adhesive properties of TNR over the course of development and during synapse maintenance. The sequence is that of Tenascin-R (Tnr) from Rattus norvegicus (Rat).